The sequence spans 217 residues: 3-demethoxyubiquinol 3-hydroxylase (217 aa).

E66, E96, H99, E148, E180, and H183 together coordinate Fe cation.

This sequence belongs to the COQ7 family. Fe cation serves as cofactor.

Its subcellular location is the cell membrane. It carries out the reaction a 5-methoxy-2-methyl-3-(all-trans-polyprenyl)benzene-1,4-diol + AH2 + O2 = a 3-demethylubiquinol + A + H2O. It functions in the pathway cofactor biosynthesis; ubiquinone biosynthesis. Functionally, catalyzes the hydroxylation of 2-nonaprenyl-3-methyl-6-methoxy-1,4-benzoquinol during ubiquinone biosynthesis. This chain is 3-demethoxyubiquinol 3-hydroxylase, found in Xylella fastidiosa (strain Temecula1 / ATCC 700964).